The sequence spans 39 residues: Cytochrome b559 subunit beta (39 aa).

A helical membrane pass occupies residues 14–30; it reads WLAIHGLAVPTVFFLGS. His-18 contacts heme.

Belongs to the PsbE/PsbF family. Heterodimer of an alpha subunit and a beta subunit. PSII is composed of 1 copy each of membrane proteins PsbA, PsbB, PsbC, PsbD, PsbE, PsbF, PsbH, PsbI, PsbJ, PsbK, PsbL, PsbM, PsbT, PsbX, PsbY, PsbZ, Psb30/Ycf12, at least 3 peripheral proteins of the oxygen-evolving complex and a large number of cofactors. It forms dimeric complexes. Heme b serves as cofactor.

The protein resides in the plastid. Its subcellular location is the chloroplast thylakoid membrane. In terms of biological role, this b-type cytochrome is tightly associated with the reaction center of photosystem II (PSII). PSII is a light-driven water:plastoquinone oxidoreductase that uses light energy to abstract electrons from H(2)O, generating O(2) and a proton gradient subsequently used for ATP formation. It consists of a core antenna complex that captures photons, and an electron transfer chain that converts photonic excitation into a charge separation. The polypeptide is Cytochrome b559 subunit beta (Ephedra sinica (Chinese ephedra)).